The sequence spans 66 residues: Large ribosomal subunit protein uL29 (66 aa).

This sequence belongs to the universal ribosomal protein uL29 family.

The chain is Large ribosomal subunit protein uL29 from Rhizobium meliloti (strain 1021) (Ensifer meliloti).